The sequence spans 1037 residues: Mediator of RNA polymerase II transcription subunit 14 (1037 aa).

Belongs to the Mediator complex subunit 14 family. As to quaternary structure, component of the Mediator complex.

It localises to the nucleus. In terms of biological role, component of the Mediator complex, a coactivator involved in the regulated transcription of nearly all RNA polymerase II-dependent genes. Mediator functions as a bridge to convey information from gene-specific regulatory proteins to the basal RNA polymerase II transcription machinery. Mediator is recruited to promoters by direct interactions with regulatory proteins and serves as a scaffold for the assembly of a functional preinitiation complex with RNA polymerase II and the general transcription factors. The chain is Mediator of RNA polymerase II transcription subunit 14 (RGR1) from Candida glabrata (strain ATCC 2001 / BCRC 20586 / JCM 3761 / NBRC 0622 / NRRL Y-65 / CBS 138) (Yeast).